A 153-amino-acid chain; its full sequence is Ubiquitin-conjugating enzyme E2-18 kDa (153 aa).

Positions 2–149 constitute a UBC core domain; the sequence is AATRRLTREL…AEEFTKKNAE (148 aa). Cys86 acts as the Glycyl thioester intermediate in catalysis.

Belongs to the ubiquitin-conjugating enzyme family.

It catalyses the reaction S-ubiquitinyl-[E1 ubiquitin-activating enzyme]-L-cysteine + [E2 ubiquitin-conjugating enzyme]-L-cysteine = [E1 ubiquitin-activating enzyme]-L-cysteine + S-ubiquitinyl-[E2 ubiquitin-conjugating enzyme]-L-cysteine.. The protein operates within protein modification; protein ubiquitination. Catalyzes the covalent attachment of ubiquitin to other proteins. The sequence is that of Ubiquitin-conjugating enzyme E2-18 kDa (Ubc84D) from Drosophila melanogaster (Fruit fly).